A 933-amino-acid polypeptide reads, in one-letter code: Progesterone receptor (933 aa).

The segment at 1–48 (MTELKAKGPRAPHVAGGPPSPEVGSPLLCRPAAGPFEGSQTSDTLPEV) is disordered. The tract at residues 1–164 (MTELKAKGPR…PATQRVLSPL (164 aa)) is AF3; mediates transcriptional activation. The segment at 1 to 566 (MTELKAKGPR…YSFESLPQKI (566 aa)) is modulating, Pro-Rich. Phosphoserine is present on serine 20. Positions 55–59 (LDGLL) match the LXXL motif 1 motif. Residues 66 to 255 (GQDLPDEKTQ…GAAAGGGAAA (190 aa)) form a disordered region. Phosphoserine is present on serine 81. An LXXL motif 2 motif is present at residues 115-119 (LDTLL). Serine 130 and serine 162 each carry phosphoserine. The tract at residues 165-305 (MSRSGGKTGD…LATTMMDFIH (141 aa)) is mediates transcriptional transrepression. Positions 183 to 187 (KVLPR) match the Nuclear localization signal motif. Phosphoserine is present on residues serine 190 and serine 213. Serine 294 is modified (phosphoserine; by MAPK1). Residues 331 to 378 (GGAGAASAFAPPQSSPSASSTPVAVGDFPDCAYPPDAEPKDNAYPLYG) form a disordered region. Over residues 335 to 350 (AASAFAPPQSSPSASS) the composition is skewed to low complexity. The residue at position 345 (serine 345) is a Phosphoserine; by MAPK. A Glycyl lysine isopeptide (Lys-Gly) (interchain with G-Cter in SUMO); alternate cross-link involves residue lysine 388. Lysine 388 participates in a covalent cross-link: Glycyl lysine isopeptide (Lys-Gly) (interchain with G-Cter in ubiquitin); alternate. Position 400 is a phosphoserine; by CDK2 (serine 400). The disordered stretch occupies residues 415–454 (PDYPLGPPPQLPPRAPPSRPGEAAVTAAPASASVSSASSP). The segment covering 418–433 (PLGPPPQLPPRAPPSR) has biased composition (pro residues). The span at 437–454 (AAVTAAPASASVSSASSP) shows a compositional bias: low complexity. Residues 456–546 (STLECILYKA…VYPPYLNYLR (91 aa)) are AF1; mediates transcriptional activation. A Glycyl lysine isopeptide (Lys-Gly) (interchain with G-Cter in SUMO) cross-link involves residue lysine 531. 2 NR C4-type zinc fingers span residues 567–587 (CLIC…CGSC) and 603–627 (CAGR…LRKC). Residues 567–639 (CLICGDEASG…AGMVLGGRKF (73 aa)) constitute a DNA-binding region (nuclear receptor). Serine 676 is subject to Phosphoserine. One can recognise an NR LBD domain in the interval 679 to 913 (QDIQLIPPLI…EFPEMMSEVI (235 aa)). Residues 687–933 (LIKLLMSIEP…MVKPLLFHKK (247 aa)) form an AF2; mediates transcriptional activation region.

The protein belongs to the nuclear hormone receptor family. Interacts with SMARD1 and UNC45A. Interacts with CUEDC2; the interaction promotes ubiquitination, decreases sumoylation, and represses transcriptional activity. Interacts with PIAS3; the interaction promotes sumoylation of PR in a hormone-dependent manner, inhibits DNA-binding, and alters nuclear export. Interacts with SP1; the interaction requires ligand-induced phosphorylation on Ser-345 by ERK1/2-MAPK. Interacts with PRMT2. Interacts with NCOA2 and NCOA1. Interacts with KLF9. Interacts with GTF2B. In terms of processing, phosphorylated on multiple serine sites. Several of these sites are hormone-dependent. Phosphorylation on Ser-294 is highly hormone-dependent and modulates ubiquitination and sumoylation on Lys-388. Phosphorylation on Ser-345 also requires induction by hormone. Basal phosphorylation on Ser-81, Ser-162, Ser-190 and Ser-400 is increased in response to progesterone and can be phosphorylated in vitro by the CDK2-A1 complex. Increased levels of phosphorylation on Ser-400 also in the presence of EGF, heregulin, IGF, PMA and FBS. Phosphorylation at this site by CDK2 is ligand-independent, and increases nuclear translocation and transcriptional activity. Phosphorylation at Ser-162 and Ser-294, but not at Ser-190, is impaired during the G(2)/M phase of the cell cycle. Phosphorylation on Ser-345 by ERK1/2 MAPK is required for interaction with SP1. Sumoylation is hormone-dependent and represses transcriptional activity. Sumoylation on all three sites is enhanced by PIAS3. Desumoylated by SENP1. Sumoylation on Lys-388, the main site of sumoylation, is repressed by ubiquitination on the same site, and modulated by phosphorylation at Ser-294. Post-translationally, ubiquitination is hormone-dependent and represses sumoylation on the same site. Promoted by MAPK-mediated phosphorylation on Ser-294. In terms of processing, palmitoylated by ZDHHC7 and ZDHHC21. Palmitoylation is required for plasma membrane targeting and for rapid intracellular signaling via ERK and AKT kinases and cAMP generation.

The protein resides in the nucleus. Its subcellular location is the cytoplasm. The steroid hormones and their receptors are involved in the regulation of eukaryotic gene expression and affect cellular proliferation and differentiation in target tissues. Transcriptional activator of several progesteron-dependent promoters in a variety of cell types. Involved in activation of SRC-dependent MAPK signaling on hormone stimulation. The sequence is that of Progesterone receptor (PGR) from Trachypithecus obscurus (Dusky leaf-monkey).